A 345-amino-acid chain; its full sequence is Adenosine kinase 2 (345 aa).

The active site involves D300.

The protein belongs to the carbohydrate kinase PfkB family. As to quaternary structure, interacts with the begomovirus AL2 protein and the curtovirus L2 protein. Interacts with KIN11. It depends on Mg(2+) as a cofactor. Phosphorylated by KIN11. In terms of tissue distribution, widely expressed.

The protein resides in the cytoplasm. It catalyses the reaction adenosine + ATP = AMP + ADP + H(+). Its pathway is purine metabolism; AMP biosynthesis via salvage pathway; AMP from adenosine: step 1/1. With respect to regulation, inactivated by the begomovirus AL2 protein or the curtovirus L2 protein. Functionally, ATP dependent phosphorylation of adenosine and other related nucleoside analogs to monophosphate derivatives. Essential to sustain methyl recycling. The polypeptide is Adenosine kinase 2 (Arabidopsis thaliana (Mouse-ear cress)).